The following is a 940-amino-acid chain: AP-2 complex subunit alpha (940 aa).

Ser632 and Ser634 each carry phosphoserine. Positions 651–662 are enriched in polar residues; sequence SHSKLNNSNANT. The disordered stretch occupies residues 651 to 679; the sequence is SHSKLNNSNANTDLLGLSTPPSNNIGSGS. Residues 668 to 679 show a composition bias toward low complexity; sequence STPPSNNIGSGS.

It belongs to the adaptor complexes large subunit family. In terms of assembly, adaptor protein complex 2 (AP-2) is a heterotetramer composed of two large adaptins (alpha-type and beta-type subunits), a medium adaptin (mu-type subunit AP50) and a small adaptin (sigma-type subunit AP17). Expressed in the Garland cells, imaginal disks, adult midgut precursors, the antenno-maxillary complex, the endoderm, the fat bodies, and the visceral mesoderm and cells of the CNS and PNS including neuroblasts, the presumptive stomatogastric nervous system, and the lateral chordotonal sense organs.

The protein resides in the cell membrane. Its subcellular location is the membrane. It localises to the coated pit. Adaptins are components of the adapter complexes which link clathrin to receptors in coated vesicles. Clathrin-associated protein complexes are believed to interact with the cytoplasmic tails of membrane proteins, leading to their selection and concentration. AP-2alpha is a subunit of the plasma membrane adapter. The sequence is that of AP-2 complex subunit alpha (AP-2alpha) from Drosophila melanogaster (Fruit fly).